A 275-amino-acid polypeptide reads, in one-letter code: Mitochondrial outer membrane porin (275 aa).

It belongs to the eukaryotic mitochondrial porin (TC 1.B.8.1) family.

It is found in the mitochondrion outer membrane. Its function is as follows. Forms a channel through the cell membrane that allows diffusion of small hydrophilic molecules. The channel adopts an open conformation at low or zero membrane potential and a closed conformation at potentials above 30-40 mV. The open state has a weak anion selectivity whereas the closed state is cation-selective. This is Mitochondrial outer membrane porin (VDAC1) from Triticum aestivum (Wheat).